A 41-amino-acid chain; its full sequence is Photosystem I reaction center subunit IX (41 aa).

The helical transmembrane segment at 7 to 27 (YLSTAPVVAFAWLTFTAGFII) threads the bilayer.

This sequence belongs to the PsaJ family.

It is found in the plastid. The protein localises to the chloroplast thylakoid membrane. In terms of biological role, may help in the organization of the PsaE and PsaF subunits. In Stigeoclonium helveticum (Green alga), this protein is Photosystem I reaction center subunit IX.